Here is a 376-residue protein sequence, read N- to C-terminus: N-acetyldiaminopimelate deacetylase (376 aa).

Asp-69 is an active-site residue. Glu-128 (proton acceptor) is an active-site residue.

Belongs to the peptidase M20A family. N-acetyldiaminopimelate deacetylase subfamily.

The catalysed reaction is N-acetyl-(2S,6S)-2,6-diaminopimelate + H2O = (2S,6S)-2,6-diaminopimelate + acetate. It functions in the pathway amino-acid biosynthesis; L-lysine biosynthesis via DAP pathway; LL-2,6-diaminopimelate from (S)-tetrahydrodipicolinate (acetylase route): step 3/3. Catalyzes the conversion of N-acetyl-diaminopimelate to diaminopimelate and acetate. In Bacillus cytotoxicus (strain DSM 22905 / CIP 110041 / 391-98 / NVH 391-98), this protein is N-acetyldiaminopimelate deacetylase.